Reading from the N-terminus, the 110-residue chain is MPKTKKKDSSSDSDSGPDDRIKPASKKAKESDAPNSDPKDSGENGATSWTLEGLRQVRINEFRGRKSVDIREFYDKGGQILPGKKGISLSLIQWKKLLEVAEEVTRAIEN.

Positions 1–50 (MPKTKKKDSSSDSDSGPDDRIKPASKKAKESDAPNSDPKDSGENGATSWT) are disordered. Basic and acidic residues predominate over residues 17 to 42 (PDDRIKPASKKAKESDAPNSDPKDSG).

Belongs to the transcriptional coactivator PC4 family.

It localises to the nucleus. General coactivator that functions cooperatively with TAFs and mediates functional interactions between upstream activators and the general transcriptional machinery. Binds single-stranded DNA. Binds specifically to the NssBF element, a short nucleotide sequence of the 1731 retrotransposon, to repress promoter activity. This Drosophila melanogaster (Fruit fly) protein is RNA polymerase II transcriptional coactivator (Ssb-c31a).